A 1634-amino-acid chain; its full sequence is Protein TIC 214 (1634 aa).

The next 5 helical transmembrane spans lie at 25–45 (FIIGQFIRFISIYYAPLYVAL), 53–73 (ILALPYLLIHLFWNTDKSFFA), 94–116 (HFILQLLNSCILPNSTLARLITI), 133–153 (FAWFIGQIFMLNSFELVLVWI), and 172–192 (IFVILFNCLFGSLLFILSIQC). Disordered regions lie at residues 216–242 (RERLQSEEERDVEKKKPDYKLPDSESE) and 1365–1395 (QQKSETDSETDSQQKNIAETQKYLEEDSTKS). Residues 1386–1395 (KYLEEDSTKS) show a composition bias toward basic and acidic residues.

The protein belongs to the TIC214 family. As to quaternary structure, part of the Tic complex.

It localises to the plastid. It is found in the chloroplast inner membrane. In terms of biological role, involved in protein precursor import into chloroplasts. May be part of an intermediate translocation complex acting as a protein-conducting channel at the inner envelope. In Cuscuta exaltata (Tall dodder), this protein is Protein TIC 214.